Reading from the N-terminus, the 854-residue chain is Disrupted in schizophrenia 1 protein (854 aa).

The span at 1 to 18 (MPGGGPQGAPAAAGGGGV) shows a compositional bias: gly residues. 4 disordered regions span residues 1 to 24 (MPGG…RAGS), 179 to 205 (SAEL…SHSA), 221 to 257 (GERG…GPHE), and 278 to 323 (AQAA…SGDA). An interaction with MAP1A region spans residues 1 to 292 (MPGGGPQGAP…NSSRPERDMH (292 aa)). The Interaction with FBXW7 signature appears at 197 to 203 (PTPPGSH). Positions 285 to 295 (SRPERDMHSLP) are enriched in basic and acidic residues. Residues 293–696 (SLPDMDPGSS…LGKVWEADLE (404 aa)) are interaction with TRAF3IP1. The span at 296 to 309 (DMDPGSSSSLDPSL) shows a compositional bias: low complexity. Coiled-coil stretches lie at residues 366-394 (ENDD…HFQL), 452-505 (ITRR…CDLT), and 602-666 (WTAK…SVKE). Residue lysine 372 forms a Glycyl lysine isopeptide (Lys-Gly) (interchain with G-Cter in ubiquitin) linkage. The segment at 440 to 597 (LEPTAQDSLH…LLEAKMHAIS (158 aa)) is required for localization to punctate cytoplasmic foci. The tract at residues 446–854 (DSLHVSITRR…MTAGVHEAQA (409 aa)) is necessary and sufficient for interaction with PCNT and localization at the centrosome. Residues 598 to 854 (GNHFWTAKDL…MTAGVHEAQA (257 aa)) are interaction with ATF4 and ATF5. A disordered region spans residues 716-739 (VEDERQMDDLEGAAPPIPPRLHSE). The interval 727–854 (GAAPPIPPRL…MTAGVHEAQA (128 aa)) is interaction with PAFAH1B1. The stretch at 802-830 (SHDEDLIQSLRRELQMVKETLQAMILQLQ) forms a coiled coil. The segment at 802–835 (SHDEDLIQSLRRELQMVKETLQAMILQLQPAKEA) is interaction with NDEL1.

In terms of assembly, interacts with NDEL1. Interacts with CCDC88A (via C-terminus); the interaction is direct. Interacts with GSK3B. Interacts with tubulin alpha, ACTN2, ANKHD1, ATF4, ATF5, CEP63, EIF3S3, MAP1A, NDEL1, PAFAH1B1, RANBP9, SPTBN4, SYNE1 and TRAF3IP1. Interaction with microtubules may be mediated in part by TRAF3IP1. Interacts (via C-terminal) with PCNT. Interacts with CHCHD6. Interacts with CCDC141. Interacts with FBXW7, the substrate-recognition component of a SCF (SKP1-CUL1-F-box protein) E3 ubiquitin-protein ligase complex; the interaction targets DISC1 for proteasomal degradation. Interacts with ZNF365. Interacts with ATF4; inhibiting ATF4 transcription factor activity by disrupting ATF4 dimerization and DNA-binding. Interacts with PDE4B (isoform PDE4B5). Ubiquitinated. Ubiquitination with 'Lys-48'-linked polyubiquitin chains leads to its proteasomal degradation. Ubiquitous. Highly expressed in the dentate gyrus of the hippocampus. Also expressed in the temporal and parahippocampal cortices and cells of the white matter.

It is found in the cytoplasm. The protein localises to the cytoskeleton. The protein resides in the mitochondrion. It localises to the microtubule organizing center. Its subcellular location is the centrosome. It is found in the postsynaptic density. Its function is as follows. Involved in the regulation of multiple aspects of embryonic and adult neurogenesis. Required for neural progenitor proliferation in the ventrical/subventrical zone during embryonic brain development and in the adult dentate gyrus of the hippocampus. Participates in the Wnt-mediated neural progenitor proliferation as a positive regulator by modulating GSK3B activity and CTNNB1 abundance. Plays a role as a modulator of the AKT-mTOR signaling pathway controlling the tempo of the process of newborn neurons integration during adult neurogenesis, including neuron positioning, dendritic development and synapse formation. Inhibits the activation of AKT-mTOR signaling upon interaction with CCDC88A. Regulates the migration of early-born granule cell precursors toward the dentate gyrus during the hippocampal development. Inhibits ATF4 transcription factor activity in neurons by disrupting ATF4 dimerization and DNA-binding. Plays a role, together with PCNT, in the microtubule network formation. This Homo sapiens (Human) protein is Disrupted in schizophrenia 1 protein.